We begin with the raw amino-acid sequence, 795 residues long: Phenylalanine--tRNA ligase beta subunit (795 aa).

The 110-residue stretch at 39 to 148 (AGEFTGVKVG…EGTTLGADVR (110 aa)) folds into the tRNA-binding domain. The B5 domain maps to 401-476 (PKANTVELRR…RIYGYNNIPN (76 aa)). 4 residues coordinate Mg(2+): Asp-454, Asp-460, Glu-463, and Glu-464. The FDX-ACB domain occupies 701-794 (SKFPANRRDI…IGEKFSATLR (94 aa)).

This sequence belongs to the phenylalanyl-tRNA synthetase beta subunit family. Type 1 subfamily. As to quaternary structure, tetramer of two alpha and two beta subunits. Mg(2+) is required as a cofactor.

It is found in the cytoplasm. The catalysed reaction is tRNA(Phe) + L-phenylalanine + ATP = L-phenylalanyl-tRNA(Phe) + AMP + diphosphate + H(+). The polypeptide is Phenylalanine--tRNA ligase beta subunit (Aliivibrio fischeri (strain ATCC 700601 / ES114) (Vibrio fischeri)).